Consider the following 459-residue polypeptide: MNRLPSSASALACSAHALNLIEKRTLDHEEMKALNREVIEYFKEHVNPGFLEYRKSVTAGGDYGAVEWQAGSLNTLVDTQGQEFIDCLGGFGIFNVGHRNPVVVSAVQNQLAKQPLHSQELLDPLRAMLAKTLAALTPGKLKYSFFCNSGTESVEAALKLAKAYQSPRGKFTFIATSGAFHGKSLGALSATAKSTFRKPFMPLLPGFRHVPFGNIEAMRTALNECKKTGDDVAAVILEPIQGEGGVILPPPGYLTAVRKLCDEFGALMILDEVQTGMGRTGKMFACEHENVQPDILCLAKALGGGVMPIGATIATEEVFSVLFDNPFLHTTTFGGNPLACAAALATINVLLEQNLPAQAEQKGDMLLDGFRQLAREYPDLVQEARGKGMLMAIEFVDNEIGYNFASEMFRQRVLVAGTLNNAKTIRIEPPLTLTIEQCELVIKAARKALAAMRVSVEEA.

Pyridoxal 5'-phosphate-binding positions include 150–151 (GT) and glutamine 274. The residue at position 300 (lysine 300) is an N6-(pyridoxal phosphate)lysine. Threonine 332 is a pyridoxal 5'-phosphate binding site.

Belongs to the class-III pyridoxal-phosphate-dependent aminotransferase family. Putrescine aminotransferase subfamily. Pyridoxal 5'-phosphate serves as cofactor.

The enzyme catalyses an alkane-alpha,omega-diamine + 2-oxoglutarate = an omega-aminoaldehyde + L-glutamate. The catalysed reaction is putrescine + 2-oxoglutarate = 1-pyrroline + L-glutamate + H2O. It catalyses the reaction cadaverine + 2-oxoglutarate = 5-aminopentanal + L-glutamate. It participates in amine and polyamine degradation; putrescine degradation; 4-aminobutanal from putrescine (transaminase route): step 1/1. In terms of biological role, catalyzes the aminotransferase reaction from putrescine to 2-oxoglutarate, leading to glutamate and 4-aminobutanal, which spontaneously cyclizes to form 1-pyrroline. This is the first step in one of two pathways for putrescine degradation, where putrescine is converted into 4-aminobutanoate (gamma-aminobutyrate or GABA) via 4-aminobutanal. Also functions as a cadaverine transaminase in a a L-lysine degradation pathway to succinate that proceeds via cadaverine, glutarate and L-2-hydroxyglutarate. This Escherichia coli (strain K12 / MC4100 / BW2952) protein is Putrescine aminotransferase.